The sequence spans 470 residues: Rhamnulokinase (470 aa).

12-16 (ASSGR) is an ATP binding site. Substrate is bound by residues Ala80 and 237–239 (HDT). Asp238 (proton acceptor) is an active-site residue. ATP is bound at residue Thr259. Asn296 provides a ligand contact to substrate. An ATP-binding site is contributed by Gln304. Residues Cys353 and Cys370 are joined by a disulfide bond. Gly402 contributes to the ATP binding site.

It belongs to the rhamnulokinase family. The cofactor is Mg(2+).

It carries out the reaction L-rhamnulose + ATP = L-rhamnulose 1-phosphate + ADP + H(+). The protein operates within carbohydrate degradation; L-rhamnose degradation; glycerone phosphate from L-rhamnose: step 2/3. Its function is as follows. Involved in the catabolism of L-rhamnose (6-deoxy-L-mannose). Catalyzes the transfer of the gamma-phosphate group from ATP to the 1-hydroxyl group of L-rhamnulose to yield L-rhamnulose 1-phosphate. The polypeptide is Rhamnulokinase (Oceanobacillus iheyensis (strain DSM 14371 / CIP 107618 / JCM 11309 / KCTC 3954 / HTE831)).